Consider the following 80-residue polypeptide: Raniseptin-2 (80 aa).

A signal peptide spans 1–22 (MAFLKKSLFLVLFLGIVSLSIC). Positions 23-49 (EEEKRVGEEEEKQEEENEELSEEELRE) are excised as a propeptide. Positions 27–46 (RVGEEEEKQEEENEELSEEE) are disordered. The segment covering 30-44 (EEEEKQEEENEELSE) has biased composition (acidic residues).

It belongs to the frog skin active peptide (FSAP) family. Dermaseptin subfamily. Expressed by the skin glands.

It localises to the secreted. In terms of biological role, has antibacterial activity. In Boana raniceps (Chaco tree frog), this protein is Raniseptin-2.